The sequence spans 626 residues: Endoglucanase 19 (626 aa).

An N-terminal signal peptide occupies residues 1–23 (MGSRTTISILVVLLLGLVQLAIS). Aspartate 79 serves as the catalytic Nucleophile. Active-site residues include histidine 412, aspartate 464, and glutamate 473. Residues 515–536 (APVPQRKPTKPPAASSPSPITI) are disordered. A compositionally biased stretch (low complexity) spans 526–536 (PAASSPSPITI). N-linked (GlcNAc...) asparagine glycans are attached at residues asparagine 560 and asparagine 622.

This sequence belongs to the glycosyl hydrolase 9 (cellulase E) family.

Its subcellular location is the secreted. The enzyme catalyses Endohydrolysis of (1-&gt;4)-beta-D-glucosidic linkages in cellulose, lichenin and cereal beta-D-glucans.. The protein is Endoglucanase 19 of Arabidopsis thaliana (Mouse-ear cress).